The following is a 394-amino-acid chain: Na(+)/H(+) antiporter NhaA (394 aa).

11 consecutive transmembrane segments (helical) span residues 14-34 (AGGL…NSAL), 59-79 (LLLW…GLEV), 95-115 (VFPA…YLLF), 125-145 (GWAI…ALLG), 154-174 (VFLL…IALF), 179-199 (VSLQ…YMNW), 213-233 (LVLW…GVIV), 254-274 (GLHP…NAGV), 292-312 (IATG…WLAV), 328-348 (IFAV…IASL), and 363-383 (LGIL…LRLV).

Belongs to the NhaA Na(+)/H(+) (TC 2.A.33) antiporter family.

It is found in the cell inner membrane. The enzyme catalyses Na(+)(in) + 2 H(+)(out) = Na(+)(out) + 2 H(+)(in). Its function is as follows. Na(+)/H(+) antiporter that extrudes sodium in exchange for external protons. The chain is Na(+)/H(+) antiporter NhaA from Yersinia pseudotuberculosis serotype O:1b (strain IP 31758).